The following is a 479-amino-acid chain: Ribosomal RNA small subunit methyltransferase F (479 aa).

S-adenosyl-L-methionine contacts are provided by residues 125–131 (AAAPGSK), Glu149, Asp176, and Asp194. The active-site Nucleophile is the Cys247.

It belongs to the class I-like SAM-binding methyltransferase superfamily. RsmB/NOP family.

The protein resides in the cytoplasm. It carries out the reaction cytidine(1407) in 16S rRNA + S-adenosyl-L-methionine = 5-methylcytidine(1407) in 16S rRNA + S-adenosyl-L-homocysteine + H(+). Its function is as follows. Specifically methylates the cytosine at position 1407 (m5C1407) of 16S rRNA. In Escherichia coli (strain UTI89 / UPEC), this protein is Ribosomal RNA small subunit methyltransferase F.